Reading from the N-terminus, the 124-residue chain is Protein BEX3 (124 aa).

Residues 1–56 form a disordered region; it reads MANVHQENEEMEQPLQNGQEDRPVGGGEGHQPAANNNNNNHNHNHNHHRRGQARRL. Residues 42-53 show a composition bias toward basic residues; sequence NHNHNHHRRGQA. Residues 81–106 are interaction with p75NTR/NGFR; it reads EMFMEEMREIRRKLRELQLRNCLRIL. An interaction with 14-3-3 epsilon region spans residues 81–124; sequence EMFMEEMREIRRKLRELQLRNCLRILMGELSNHHDHHDEFCLMP. The Nuclear export signal motif lies at 90–100; the sequence is IRRKLRELQLR. The segment at 113–117 is his cluster; it reads HHDHH. Residue C121 coordinates Zn(2+).

This sequence belongs to the BEX family. In terms of assembly, self-associates. Binds to the DEATH domain of p75NTR/NGFR. Interacts with 14-3-3 epsilon (YWHAE). Interacts with DIABLO/SMAC. In terms of processing, ubiquitinated. Degraded by the proteasome. Widely expressed.

Its subcellular location is the nucleus. It localises to the cytoplasm. It is found in the cytosol. May be a signaling adapter molecule involved in NGFR/p75NTR-mediated apoptosis induced by NGF. Plays a role in zinc-triggered neuronal death. In absence of reductive stress, acts as a pseudosubstrate for the CRL2(FEM1B) complex: associates with FEM1B via zinc, thereby preventing association between FEM1B and its substrates. The protein is Protein BEX3 of Mus musculus (Mouse).